Consider the following 546-residue polypeptide: Phosphatidylinositol 4-phosphate 5-kinase type-1 alpha (546 aa).

The PIPK domain maps to 66–434 (TSSALKGAIQ…RFQRFMCNTV (369 aa)). K88 is covalently cross-linked (Glycyl lysine isopeptide (Lys-Gly) (interchain with G-Cter in ubiquitin)). 2 disordered regions span residues 442–475 (PSPTKKFRSGPSFSRRSGPSGNSCTSQLMASGEH) and 491–518 (LGRPDVLPQTPPLEEISEGSPVPGPSFS). Low complexity-rich tracts occupy residues 450 to 462 (SGPSFSRRSGPSG) and 509 to 518 (GSPVPGPSFS).

Interacts with RAC1. Interacts with TUT1. Forms a complex with CDH1/E-cadherin, CTNNB1/beta-catenin and CTNND1 at the plasma membrane upon calcium stimulation. Found in a ternary complex with IRS1 and DGKZ in the absence of insulin stimulation. Interacts with DGKZ. Interacts with PIP4K2C; the interaction inhibits PIP5K1A kinase activity. In terms of tissue distribution, highest expression in brain. Also detected in skeletal muscle, testis, brain and lung.

It is found in the cell membrane. The protein localises to the cytoplasm. Its subcellular location is the nucleus. It localises to the nucleus speckle. The protein resides in the cell projection. It is found in the ruffle. The protein localises to the lamellipodium. The enzyme catalyses a 1,2-diacyl-sn-glycero-3-phospho-(1D-myo-inositol 4-phosphate) + ATP = a 1,2-diacyl-sn-glycero-3-phospho-(1D-myo-inositol-4,5-bisphosphate) + ADP + H(+). The catalysed reaction is 1-octadecanoyl-2-(5Z,8Z,11Z,14Z)-eicosatetraenoyl-sn-glycero-3-phospho-1D-myo-inositol 4-phosphate + ATP = 1-octadecanoyl-2-(5Z,8Z,11Z,14Z)-eicosatetraenoyl-sn-glycero-3-phospho-1D-myo-inositol 4,5-bisphosphate + ADP + H(+). It carries out the reaction 1,2-dihexadecanoyl-sn-glycero-3-phospho-(1D-myo-inositol-4-phosphate) + ATP = 1,2-dihexadecanoyl-sn-glycero-3-phospho-(1D-myo-inositol-4,5-bisphosphate) + ADP + H(+). It catalyses the reaction 1-octadecanoyl-2-(9Z)-octadecenoyl-sn-glycero-3-phospho-1D-myo-inositol 4-phosphate + ATP = 1-octadecanoyl-2-(9Z)-octadecenoyl-sn-glycero-3-phospho-1D-myo-inositol 4,5-bisphosphate + ADP + H(+). The enzyme catalyses 1-octadecanoyl-2-(9Z)-octadecenoyl-sn-glycero-3-phospho-1D-myo-inositol + ATP = 1-octadecanoyl-2-(9Z)-octadecenoyl-sn-glycero-3-phospho-1D-myo-inositol 5-phosphate + ADP + H(+). The catalysed reaction is 1-octadecanoyl-2-(9Z,12Z)-octadecadienoyl-sn-glycero-3-phospho-1D-myo-inositol + ATP = 1-octadecanoyl-2-(9Z,12Z)-octadecadienoyl-sn-glycero-3-phospho-1D-myo-inositol 5-phosphate + ADP + H(+). It carries out the reaction 1-octadecanoyl-2-(5Z,8Z,11Z,14Z-eicosatetraenoyl)-sn-glycero-3-phospho-(1D-myo-inositol) + ATP = 1-octadecanoyl-2-(5Z,8Z,11Z,14Z)-eicosatetraenoyl-sn-glycero-3-phospho-1D-myo-inositol 5-phosphate + ADP + H(+). It catalyses the reaction 1,2-di-(9Z,12Z)-octadecadienoyl-sn-glycero-3-phospho-1D-myo-inositol + ATP = 1,2-di(9Z,12Z)-octadecadienoyl-sn-glycero-3-phospho-1D-myo-inositol 5-phosphate + ADP + H(+). With respect to regulation, activated by phosphatidic acid. Catalyzes the phosphorylation of phosphatidylinositol 4-phosphate (PtdIns(4)P/PI4P) to form phosphatidylinositol 4,5-bisphosphate (PtdIns(4,5)P2/PIP2), a lipid second messenger that regulates several cellular processes such as signal transduction, vesicle trafficking, actin cytoskeleton dynamics, cell adhesion, and cell motility. PtdIns(4,5)P2 can directly act as a second messenger or can be utilized as a precursor to generate other second messengers: inositol 1,4,5-trisphosphate (IP3), diacylglycerol (DAG) or phosphatidylinositol-3,4,5-trisphosphate (PtdIns(3,4,5)P3/PIP3). PIP5K1A-mediated phosphorylation of PtdIns(4)P is the predominant pathway for PtdIns(4,5)P2 synthesis. Can also use phosphatidylinositol (PtdIns) as substrate in vitro. Together with PIP5K1C, is required for phagocytosis, both enzymes regulating different types of actin remodeling at sequential steps. Promotes particle ingestion by activating the WAS GTPase-binding protein that induces Arp2/3 dependent actin polymerization at the nascent phagocytic cup. Together with PIP5K1B, is required, after stimulation by G-protein coupled receptors, for the synthesis of IP3 that will induce stable platelet adhesion. Recruited to the plasma membrane by the E-cadherin/beta-catenin complex where it provides the substrate PtdIns(4,5)P2 for the production of PtdIns(3,4,5)P3, IP3 and DAG, that will mobilize internal calcium and drive keratinocyte differentiation. Positively regulates insulin-induced translocation of SLC2A4 to the cell membrane in adipocytes. Together with PIP5K1C has a role during embryogenesis. Independently of its catalytic activity, is required for membrane ruffling formation, actin organization and focal adhesion formation during directional cell migration by controlling integrin-induced translocation of the small GTPase RAC1 to the plasma membrane. Also functions in the nucleus where it acts as an activator of TUT1 adenylyltransferase activity in nuclear speckles, thereby regulating mRNA polyadenylation of a select set of mRNAs. The protein is Phosphatidylinositol 4-phosphate 5-kinase type-1 alpha of Mus musculus (Mouse).